We begin with the raw amino-acid sequence, 459 residues long: Putrescine aminotransferase (459 aa).

Residues Gly150–Thr151 and Gln274 contribute to the pyridoxal 5'-phosphate site. Residue Lys300 is modified to N6-(pyridoxal phosphate)lysine. Thr332 serves as a coordination point for pyridoxal 5'-phosphate.

This sequence belongs to the class-III pyridoxal-phosphate-dependent aminotransferase family. Putrescine aminotransferase subfamily. Requires pyridoxal 5'-phosphate as cofactor.

The enzyme catalyses an alkane-alpha,omega-diamine + 2-oxoglutarate = an omega-aminoaldehyde + L-glutamate. It carries out the reaction putrescine + 2-oxoglutarate = 1-pyrroline + L-glutamate + H2O. It catalyses the reaction cadaverine + 2-oxoglutarate = 5-aminopentanal + L-glutamate. The protein operates within amine and polyamine degradation; putrescine degradation; 4-aminobutanal from putrescine (transaminase route): step 1/1. Catalyzes the aminotransferase reaction from putrescine to 2-oxoglutarate, leading to glutamate and 4-aminobutanal, which spontaneously cyclizes to form 1-pyrroline. This is the first step in one of two pathways for putrescine degradation, where putrescine is converted into 4-aminobutanoate (gamma-aminobutyrate or GABA) via 4-aminobutanal. Also functions as a cadaverine transaminase in a a L-lysine degradation pathway to succinate that proceeds via cadaverine, glutarate and L-2-hydroxyglutarate. The protein is Putrescine aminotransferase of Salmonella paratyphi B (strain ATCC BAA-1250 / SPB7).